The sequence spans 442 residues: Histidine--tRNA ligase (442 aa).

Belongs to the class-II aminoacyl-tRNA synthetase family. Homodimer.

It localises to the cytoplasm. The catalysed reaction is tRNA(His) + L-histidine + ATP = L-histidyl-tRNA(His) + AMP + diphosphate + H(+). In Helicobacter acinonychis (strain Sheeba), this protein is Histidine--tRNA ligase.